The sequence spans 322 residues: MSGERAKRFPLALEDLKREPRKPEGRVAERQAAGDAARQRLTAAAAVPAAASPIVPERRAPHGGVFAAKPARAKQHAPAAPGAAKRAPQGGAKQGDRSAAPNVALSGALALTSERVRERMVERLRANGVADPRVLAAMSAVPRHMFVDPGLAAQAYEDAALPIGHQQTISKPSVVARMIELAAAGRALERVLEIGTGCGYQAAVLSRVARDVYSIERVKPLYERAKLNLRPLRVPNIRLHYGDGRVGLPAAAPFDAIVIAAAGLDVPRALLEQLAIGGRLVAPVGEQAGEQVLTLVERVAPAQWRESRLDRVFFVPLKSGVI.

Positions 1–101 (MSGERAKRFP…AKQGDRSAAP (101 aa)) are disordered. The segment covering 14 to 29 (EDLKREPRKPEGRVAE) has biased composition (basic and acidic residues). Low complexity-rich tracts occupy residues 33–51 (AGDAARQRLTAAAAVPAAA) and 76–91 (HAPAAPGAAKRAPQGG). Residue S170 is part of the active site.

Belongs to the methyltransferase superfamily. L-isoaspartyl/D-aspartyl protein methyltransferase family.

The protein localises to the cytoplasm. It carries out the reaction [protein]-L-isoaspartate + S-adenosyl-L-methionine = [protein]-L-isoaspartate alpha-methyl ester + S-adenosyl-L-homocysteine. Catalyzes the methyl esterification of L-isoaspartyl residues in peptides and proteins that result from spontaneous decomposition of normal L-aspartyl and L-asparaginyl residues. It plays a role in the repair and/or degradation of damaged proteins. This chain is Protein-L-isoaspartate O-methyltransferase, found in Burkholderia pseudomallei (strain 1106a).